We begin with the raw amino-acid sequence, 228 residues long: Sec-independent protein translocase protein TatB (228 aa).

A helical transmembrane segment spans residues Met-1–Gly-21. 2 disordered regions span residues Arg-138–Asp-162 and Pro-195–Ser-228. Residues Ala-206–Ser-228 are compositionally biased toward basic residues.

This sequence belongs to the TatB family. In terms of assembly, the Tat system comprises two distinct complexes: a TatABC complex, containing multiple copies of TatA, TatB and TatC subunits, and a separate TatA complex, containing only TatA subunits. Substrates initially bind to the TatABC complex, which probably triggers association of the separate TatA complex to form the active translocon.

It localises to the cell inner membrane. In terms of biological role, part of the twin-arginine translocation (Tat) system that transports large folded proteins containing a characteristic twin-arginine motif in their signal peptide across membranes. Together with TatC, TatB is part of a receptor directly interacting with Tat signal peptides. TatB may form an oligomeric binding site that transiently accommodates folded Tat precursor proteins before their translocation. The sequence is that of Sec-independent protein translocase protein TatB from Neisseria meningitidis serogroup A / serotype 4A (strain DSM 15465 / Z2491).